Here is a 282-residue protein sequence, read N- to C-terminus: Transcription factor BC1 (282 aa).

The segment at 34–123 is disordered; that stretch reads TTAPAIPEDA…ATDSHSLAER (90 aa). Polar residues predominate over residues 45–55; it reads METSSVVLDTS. The span at 75–84 shows a compositional bias: basic and acidic residues; it reads HSKEAKENGR. The Nuclear localization signal motif lies at 109–116; sequence ARRGQATD. The tract at residues 113–126 is basic motif; degenerate; it reads QATDSHSLAERVRR. The bHLH domain maps to 113 to 163; that stretch reads QATDSHSLAERVRRERISERMRMLQALVPGCDKVTGKALILDEIINYVQSL. The segment at 127-163 is helix-loop-helix motif; the sequence is ERISERMRMLQALVPGCDKVTGKALILDEIINYVQSL. The tract at residues 219–251 is disordered; the sequence is PAQSHAIMDTSNTSPTPYTLQVQGGSNNNSLSQ.

Belongs to the bHLH protein family. In terms of assembly, homodimer. Component of a nuclear cell elongation controlling complex made of ILI5/BUL1, LO9-177 and BC1. Interacts with ILI5/BUL1 only in the presence of LO9-177. Interacts with IBH1. Binds to LO9-177 in the nucleus. Interacts with BCL1. In terms of tissue distribution, preferentially present in anthers and leaves lamina joints. Expressed in seedlings, leaves sheaths, collars and panicles.

It is found in the nucleus. Functionally, transcription activator that contributes, together with LO9-177 and ILI5/BUL1, to the promotion of leaf inclination and grain size by modulating cell elongation. Involved in the RLI1-dependent modulation of leaf inclination by promoting lamina joint cell elongation, especially in response to phosphate (Pi) availability. This Oryza sativa subsp. japonica (Rice) protein is Transcription factor BC1.